We begin with the raw amino-acid sequence, 511 residues long: Glucose-1-phosphate adenylyltransferase large subunit 1, chloroplastic/amyloplastic (511 aa).

Residues 1 to 58 (MAAMDLRVAAPASVAAAARCGTSLARPWPARAVGGGGGGGGRGRRLSVRTSVATTEAA) constitute a chloroplast transit peptide.

The protein belongs to the bacterial/plant glucose-1-phosphate adenylyltransferase family. As to quaternary structure, heterotetramer composed of two small and two large subunits. As to expression, expressed in leaves and stems.

The protein localises to the plastid. It localises to the chloroplast. It is found in the amyloplast. It catalyses the reaction alpha-D-glucose 1-phosphate + ATP + H(+) = ADP-alpha-D-glucose + diphosphate. The protein operates within glycan biosynthesis; starch biosynthesis. Its activity is regulated as follows. Activated by 3'phosphoglycerate, inhibited by orthophosphate. Allosteric regulation. Its function is as follows. Involved in synthesis of starch. Catalyzes the synthesis of ADP-glucose, a molecule that serves as an activated glycosyl donor for alpha-1,4-glucan synthesis. Essential for starch synthesis in leaf chloroplasts and endosperm amyloplasts. This chain is Glucose-1-phosphate adenylyltransferase large subunit 1, chloroplastic/amyloplastic, found in Oryza sativa subsp. japonica (Rice).